The primary structure comprises 77 residues: Tautomerase PptA (77 aa).

The Proton acceptor; via imino nitrogen role is filled by proline 2.

This sequence belongs to the 4-oxalocrotonate tautomerase family. PptA subfamily. As to quaternary structure, homodimer.

The protein resides in the cytoplasm. This Escherichia coli (strain K12 / MC4100 / BW2952) protein is Tautomerase PptA.